Reading from the N-terminus, the 748-residue chain is ATP-dependent rRNA helicase SPB4 (748 aa).

Positions 15–43 match the Q motif motif; it reads WAKLNPPLSPWILDVINSMGFKNMTPVQA. The region spanning 46–260 is the Helicase ATP-binding domain; that stretch reads IPRAVKNQDC…GLGLRNPVRI (215 aa). Residue 59 to 66 participates in ATP binding; sequence AVTGSGKT. Residues 119-156 are disordered; sequence ESEEETGDVEAHAPPFASSSRSPSPQTPDKPLFPLPML. Low complexity predominate over residues 132 to 142; the sequence is PPFASSSRSPS. The span at 143 to 152 shows a compositional bias: pro residues; the sequence is PQTPDKPLFP. A DEAD box motif is present at residues 207-210; it reads DEAD. In terms of domain architecture, Helicase C-terminal spans 295-460; sequence KTLQLIRLLL…KAQRSILDFL (166 aa). The interval 614–748 is disordered; it reads AQRADNQSSN…IGGGMFDDLE (135 aa). 2 stretches are compositionally biased toward basic and acidic residues: residues 626-669 and 708-730; these read ARAE…KYEW and EIGK…KESS. The segment covering 732–748 has biased composition (gly residues); sequence GGAGGGGIGGGMFDDLE.

It belongs to the DEAD box helicase family. DDX55/SPB4 subfamily. As to quaternary structure, component of pre-60S ribosomal complexes.

The protein localises to the nucleus. It is found in the nucleolus. The enzyme catalyses ATP + H2O = ADP + phosphate + H(+). Its function is as follows. ATP-binding RNA helicase involved in the biogenesis of 60S ribosomal subunits. Binds 90S pre-ribosomal particles and dissociates from pre-60S ribosomal particles after processing of 27SB pre-rRNA. Required for the normal formation of 18S rRNA through the processing of pre-rRNAs at sites A0, A1 and A2, and the normal formation of 25S and 5.8S rRNAs through the processing of pre-rRNAs at sites C1 and C2. In Cryptococcus neoformans var. neoformans serotype D (strain B-3501A) (Filobasidiella neoformans), this protein is ATP-dependent rRNA helicase SPB4.